A 1729-amino-acid polypeptide reads, in one-letter code: 182 kDa tankyrase-1-binding protein (1729 aa).

Residues 1-12 (MKVSTLRESSAM) show a composition bias toward polar residues. The interval 1-151 (MKVSTLRESS…VRKAPAPFRP (151 aa)) is disordered. Position 14 is a phosphoserine (S14). Residues 46–63 (ALPAKPALPAKPSLLVPV) show a composition bias toward low complexity. Basic and acidic residues predominate over residues 117–127 (TGKEEAGKEEP). Position 131 is a phosphothreonine (T131). A phosphoserine mark is found at S178, S221, and S228. 3 disordered regions span residues 184–450 (GSRL…LAAL), 484–603 (PSGL…ESPL), and 657–880 (ETTQ…SSRD). The segment at 210–1572 (DEDGSTLFRG…TEILDSAMYR (1363 aa)) is acidic. The segment covering 230–245 (AECREEHSKTPEERSL) has biased composition (basic and acidic residues). Position 239 is a phosphothreonine (T239). Phosphoserine occurs at positions 287 and 301. The segment covering 352-363 (PSPGLPAEGAPE) has biased composition (low complexity). Over residues 364 to 374 (APRPSSPPPEV) the composition is skewed to pro residues. Residues S429, S435, S437, S494, and S498 each carry the phosphoserine modification. Composition is skewed to low complexity over residues 500–512 (ITEASEAAEAAEA), 524–541 (VSQQGQGAGSAPSGSGSS), and 572–583 (LPTTEGTPGLPL). T501 carries the post-translational modification Phosphothreonine. 9 positions are modified to phosphoserine: S601, S672, S691, S695, S712, S724, S744, S762, and S806. Residues 738–753 (PQPSSFSPSSWCQGAS) are compositionally biased toward polar residues. The segment covering 803–812 (ASSSQDQSKV) has biased composition (polar residues). A Phosphothreonine modification is found at T833. Residues S836, S851, S872, S877, S882, and S893 each carry the phosphoserine modification. Positions 858–872 (RDAELQDQEFGKRDS) are enriched in basic and acidic residues. The residue at position 897 (Y897) is a Phosphotyrosine. The disordered stretch occupies residues 897-1083 (YASQDANEQG…ADLEDGEMGK (187 aa)). Phosphoserine occurs at positions 899, 920, 936, and 976. Position 979 is a phosphothreonine (T979). 17 positions are modified to phosphoserine: S983, S987, S1004, S1008, S1013, S1024, S1029, S1054, S1073, S1091, S1103, S1133, S1138, S1158, S1178, S1248, and S1253. Positions 1012-1021 (GSRDAGRPGE) are enriched in basic and acidic residues. The span at 1043–1054 (RDQSSWQNSDAS) shows a compositional bias: polar residues. Residues 1240 to 1302 (EVGEGGGHSQ…GAVCSPGESK (63 aa)) form a disordered region. T1282 is modified (phosphothreonine). Phosphoserine is present on residues S1297, S1328, S1331, S1383, and S1385. The tract at residues 1362–1561 (AREHGVGGVS…SPSQDFSFIE (200 aa)) is disordered. Over residues 1389–1400 (EARDPLEARELG) the composition is skewed to basic and acidic residues. Residues 1406 to 1419 (GPETQGEDYSSSSL) are compositionally biased toward polar residues. A phosphoserine mark is found at S1435, S1439, S1450, S1452, S1473, S1476, S1503, and S1506. The interval 1450 to 1542 (SGSQGLLEEM…SDQGPAQTSR (93 aa)) is tankyrase-binding. Phosphothreonine is present on T1518. A phosphoserine mark is found at S1533, S1545, and S1558. Phosphothreonine is present on T1563. A disordered region spans residues 1575–1729 (ANLGRKRGHR…QALKLKKKKV (155 aa)). Residues 1577-1586 (LGRKRGHRAP) are compositionally biased toward basic residues. Positions 1602–1615 (SDAHLFQDSTEPRA) are enriched in basic and acidic residues. Phosphoserine is present on residues S1620, S1621, and S1631. The Nuclear localization signal motif lies at 1629 to 1635 (PQSRRTR). An N6-methyllysine modification is found at K1644. 3 positions are modified to phosphoserine: S1652, S1666, and S1715. A compositionally biased stretch (basic and acidic residues) spans 1665–1679 (RSAEEGELAESKSSQ). The Nuclear localization signal signature appears at 1723–1729 (KLKKKKV).

As to quaternary structure, binds to the ANK repeat domain of TNKS1 and TNKS2. In terms of processing, ADP-ribosylated by TNKS1 (in vitro). Detected in testis, ovary, lung, skeletal muscle, heart, prostate and pancreas, and at very low levels in brain and peripheral blood leukocytes.

It is found in the nucleus. It localises to the cytoplasm. The protein resides in the cytoskeleton. Its subcellular location is the chromosome. The sequence is that of 182 kDa tankyrase-1-binding protein (TNKS1BP1) from Homo sapiens (Human).